The sequence spans 525 residues: NAD(P)H-quinone oxidoreductase subunit 2 (525 aa).

The next 14 helical transmembrane spans lie at 14 to 34 (AIWPEVVVTLTLLIVLVVDLV), 42 to 62 (SLPALSLFGLLGALVTLVLQW), 78 to 98 (PVSILFRGLVVATAALTVMMA), 117 to 137 (LTATLGGMFLAGATDLIMVFV), 167 to 187 (LLTGASSTAIFLYGMSLLYGL), 201 to 221 (LANAGLVGILALVFCLGGIGF), 240 to 260 (PTPVVAFLSVGSKAAGFALAI), 276 to 296 (AVLSVLAILTMVLGNVVAIAQ), 302 to 322 (LLAYSSIGQAGFVLIGLVAGT), 330 to 350 (IFYLMVYLAMNLGAFLCVTLF), 374 to 394 (LCLSICLLSLGGLPPLAGFFG), 396 to 416 (LYLFWAGWQAGEYTLVLVGLV), 462 to 482 (VGMVVTLVATIFAGILSNPLF), and 494 to 514 (FLGFPTAQAFAPGSASPSLAV).

This sequence belongs to the complex I subunit 2 family. In terms of assembly, NDH-1 can be composed of about 15 different subunits; different subcomplexes with different compositions have been identified which probably have different functions.

It is found in the cellular thylakoid membrane. The enzyme catalyses a plastoquinone + NADH + (n+1) H(+)(in) = a plastoquinol + NAD(+) + n H(+)(out). The catalysed reaction is a plastoquinone + NADPH + (n+1) H(+)(in) = a plastoquinol + NADP(+) + n H(+)(out). Functionally, NDH-1 shuttles electrons from an unknown electron donor, via FMN and iron-sulfur (Fe-S) centers, to quinones in the respiratory and/or the photosynthetic chain. The immediate electron acceptor for the enzyme in this species is believed to be plastoquinone. Couples the redox reaction to proton translocation, and thus conserves the redox energy in a proton gradient. Cyanobacterial NDH-1 also plays a role in inorganic carbon-concentration. This is NAD(P)H-quinone oxidoreductase subunit 2 from Synechococcus sp. (strain JA-3-3Ab) (Cyanobacteria bacterium Yellowstone A-Prime).